A 347-amino-acid chain; its full sequence is Olfactory receptor 6J1 (347 aa).

The Extracellular segment spans residues 1 to 24 (MGNWTAAVTEFVLLGFSLSREVEL). N-linked (GlcNAc...) asparagine glycosylation is present at Asn3. A helical transmembrane segment spans residues 25 to 45 (LLLVLLLPTFLLTLLGNLLII). Residues 46 to 53 (STVLSCSR) lie on the Cytoplasmic side of the membrane. A helical membrane pass occupies residues 54–74 (LHTPMYFFLCNLSILDILFTS). The Extracellular portion of the chain corresponds to 75-98 (VISPKVLANLGSRDKTISFAGCIT). Cys96 and Cys188 are joined by a disulfide. A helical transmembrane segment spans residues 99 to 119 (QCYFYFFLGTVEFLLLTVMSY). At 120 to 138 (DRYATICCPLRYTTIMRPS) the chain is on the cytoplasmic side. The helical transmembrane segment at 139–159 (VCIGTVVFSWVGGFLSVLFPT) threads the bilayer. Residues 160–196 (ILISQLPFCGSNIINHFFCDSGPLLALACADTTAIEL) are Extracellular-facing. A helical transmembrane segment spans residues 197 to 216 (MDFMLSSMVILCCIVLVAYS). Residues 217 to 236 (YTYIILTIVRIPSASGRKKA) are Cytoplasmic-facing. A helical membrane pass occupies residues 237–257 (FNTCASHLTIVIISSGITVFI). Topologically, residues 258–270 (YVTPSQKEYLEIN) are extracellular. A helical membrane pass occupies residues 271-291 (KIPLVLSSVVTPFLNPFIYTL). Residues 292–347 (RNDTVQGVLRDVWVRVRGVFEKRMRAVLRSRLSSNKDHQGRACSSPPCVYSVKLQC) lie on the Cytoplasmic side of the membrane.

The protein belongs to the G-protein coupled receptor 1 family.

It is found in the cell membrane. Its function is as follows. Odorant receptor. This is Olfactory receptor 6J1 (OR6J1) from Homo sapiens (Human).